A 758-amino-acid polypeptide reads, in one-letter code: Microtubule-associated protein tau (758 aa).

The span at 1-26 (MAEPHQEFDVTEDHAGTYGLGDRKDQ) shows a compositional bias: basic and acidic residues. The disordered stretch occupies residues 1–573 (MAEPHQEFDV…PVPMPDLKNV (573 aa)). Ala2 carries the N-acetylalanine modification. Residues Tyr18 and Tyr29 each carry the phosphotyrosine modification. Residue Lys44 forms a Glycyl lysine isopeptide (Lys-Gly) (interchain with G-Cter in ubiquitin) linkage. Phosphoserine occurs at positions 46 and 61. Residues 61–71 (SETSDAKSTPT) show a composition bias toward polar residues. A phosphothreonine mark is found at Thr69, Thr71, and Thr111. Basic and acidic residues-rich tracts occupy residues 179 to 189 (EGGRHAPELLK) and 207 to 216 (GGKERPGSKE). A Phosphoserine modification is found at Ser214. The segment covering 217–228 (EVDEDRDVDESS) has biased composition (acidic residues). The segment covering 314-323 (EQAHSEEHLR) has biased composition (basic and acidic residues). The segment covering 325 to 340 (AAFPGAPGEGPEAQGP) has biased composition (low complexity). Basic and acidic residues-rich tracts occupy residues 344–356 (EDAK…EPSE) and 381–393 (KSKD…DKKA). A compositionally biased stretch (polar residues) spans 440 to 452 (KYVSSVTPRTGSS). Positions 455 to 466 (KEMKLKGADGKT) are enriched in basic and acidic residues. Thr470 is modified (phosphothreonine). The residue at position 472 (Arg472) is an Omega-N-methylarginine. Residue Lys480 is modified to N6,N6-dimethyllysine; alternate. Lys480 carries the N6-acetyllysine; alternate modification. A phosphothreonine mark is found at Thr486, Thr492, and Thr498. Residues 491–503 (KTPPAPKTPPSSG) are compositionally biased toward pro residues. 3 positions are modified to phosphoserine: Ser502, Ser508, and Ser512. Residues 504–531 (EPPKSGDRSGYSSPGSPGTPGSRSRTPS) are compositionally biased toward low complexity. Tyr514 bears the Phosphotyrosine mark. Phosphoserine occurs at positions 515, 516, and 519. Phosphothreonine is present on residues Thr522 and Thr529. The residue at position 531 (Ser531) is a Phosphoserine. Phosphothreonine is present on Thr534. The residue at position 542 (Lys542) is an N6-acetyllysine. Phosphothreonine is present on Thr548. A phosphoserine mark is found at Ser552 and Ser554. Tau/MAP repeat units follow at residues 561–591 (QTAP…GGGK), 592–622 (VQII…GGGS), 623–653 (VQIV…GGGQ), and 654–685 (VEVK…GGGH). Lys571 participates in a covalent cross-link: Glycyl lysine isopeptide (Lys-Gly) (interchain with G-Cter in ubiquitin). An N6-acetyllysine; alternate modification is found at Lys576. Position 576 is an N6-methyllysine; alternate (Lys576). Lys576 participates in a covalent cross-link: Glycyl lysine isopeptide (Lys-Gly) (interchain with G-Cter in ubiquitin); alternate. Residue Ser579 is modified to Phosphoserine. A Glycyl lysine isopeptide (Lys-Gly) (interchain with G-Cter in ubiquitin) cross-link involves residue Lys584. Residue Lys598 is modified to N6-acetyllysine; alternate. Lys598 participates in a covalent cross-link: Glycyl lysine isopeptide (Lys-Gly) (interchain with G-Cter in ubiquitin); alternate. Phosphoserine is present on residues Ser602 and Ser606. At Lys607 the chain carries N6-acetyllysine. Residue Ser610 is modified to Phosphoserine. Residue Lys615 is modified to N6-acetyllysine; alternate. Residue Lys615 forms a Glycyl lysine isopeptide (Lys-Gly) (interchain with G-Cter in ubiquitin); alternate linkage. Ser622 carries the phosphoserine modification. Lys628 carries the N6,N6-dimethyllysine; alternate modification. An N6-acetyllysine; alternate mark is found at Lys628, Lys634, and Lys638. Residues Lys628, Lys634, and Lys638 each participate in a glycyl lysine isopeptide (Lys-Gly) (interchain with G-Cter in ubiquitin); alternate cross-link. Ser641 carries the post-translational modification Phosphoserine. N6-acetyllysine; alternate occurs at positions 648, 660, and 664. Residues Lys648, Lys660, and Lys664 each participate in a glycyl lysine isopeptide (Lys-Gly) (interchain with G-Cter in ubiquitin); alternate cross-link. Arg666 carries the post-translational modification Omega-N-methylarginine. Position 669 is a phosphoserine (Ser669). Lys670 is covalently cross-linked (Glycyl lysine isopeptide (Lys-Gly) (interchain with G-Cter in ubiquitin)). A Phosphoserine modification is found at Ser673. An N6-acetyllysine; alternate modification is found at Lys686. Residue Lys686 forms a Glycyl lysine isopeptide (Lys-Gly) (interchain with G-Cter in ubiquitin); alternate linkage. Lys692 participates in a covalent cross-link: Glycyl lysine isopeptide (Lys-Gly) (interchain with G-Cter in ubiquitin). N6-acetyllysine; alternate is present on Lys702. Lys702 participates in a covalent cross-link: Glycyl lysine isopeptide (Lys-Gly) (interchain with G-Cter in ubiquitin); alternate. At Tyr711 the chain carries Phosphotyrosine. A phosphoserine mark is found at Ser713 and Ser717. The disordered stretch occupies residues 715-734 (VVSGDTSPRHLSNVSSTGSI). The segment covering 718–733 (GDTSPRHLSNVSSTGS) has biased composition (polar residues). Thr720 carries the phosphothreonine modification. 4 positions are modified to phosphoserine: Ser721, Ser726, Ser733, and Ser739. Position 744 is a phosphothreonine (Thr744).

In terms of assembly, interacts with MARK1, MARK2, MARK3 and MARK4. Interacts with SQSTM1 when polyubiquitinated. Interacts with PSMC2 through SQSTM1. Interacts with FKBP4. Binds to CSNK1D. Interacts with SGK1. Interacts with EPM2A; the interaction dephosphorylates MAPT at Ser-396. Interacts with PIN1. Interacts with LRRK2. Interacts with LRP1, leading to endocytosis; this interaction is reduced in the presence of LRPAP1/RAP. Post-translationally, polyubiquitinated. Requires functional TRAF6 and may provoke SQSTM1-dependent degradation by the proteasome. In terms of processing, phosphorylation at various serine and threonine residues in S-P or T-P motifs by proline-directed protein kinases (PDPK1, CDK1, CDK5, GSK3, MAPK) (a few sites per protein in interphase, more in mitosis), and at serine residues in K-X-G-S motifs by MAP/microtubule affinity-regulating kinase (MARK1, MARK2, MARK3 or MARK4), causing detachment from microtubules, and their disassembly. Phosphorylation at Ser-579 by BRSK1 and BRSK2 in neurons affects ability to bind microtubules and plays a role in neuron polarization. Phosphorylated by PHK. Dephosphorylation at several serine and threonine residues by the serine/threonine phosphatase PPP5C. Phosphorylation at Ser-214 by SGK1 mediates microtubule depolymerization and neurite formation in hippocampal neurons.

The protein localises to the cytoplasm. It is found in the cytosol. It localises to the cell membrane. The protein resides in the cytoskeleton. Its subcellular location is the cell projection. The protein localises to the axon. It is found in the dendrite. Its function is as follows. Promotes microtubule assembly and stability, and might be involved in the establishment and maintenance of neuronal polarity. The C-terminus binds axonal microtubules while the N-terminus binds neural plasma membrane components, suggesting that tau functions as a linker protein between both. Axonal polarity is predetermined by tau localization (in the neuronal cell) in the domain of the cell body defined by the centrosome. The short isoforms allow plasticity of the cytoskeleton whereas the longer isoforms may preferentially play a role in its stabilization. The chain is Microtubule-associated protein tau (MAPT) from Pongo pygmaeus (Bornean orangutan).